Reading from the N-terminus, the 75-residue chain is uncharacterized protein (75 aa).

This is an uncharacterized protein from Vaccinia virus (strain Copenhagen) (VACV).